A 505-amino-acid polypeptide reads, in one-letter code: ATP synthase subunit alpha (505 aa).

The interval 118–138 is disordered; it reads VDGLGPINTTNTRPIESPAPG. 172 to 179 contributes to the ATP binding site; that stretch reads GDRQTGKT.

The protein belongs to the ATPase alpha/beta chains family. As to quaternary structure, F-type ATPases have 2 components, CF(1) - the catalytic core - and CF(0) - the membrane proton channel. CF(1) has five subunits: alpha(3), beta(3), gamma(1), delta(1), epsilon(1). CF(0) has three main subunits: a(1), b(2) and c(9-12). The alpha and beta chains form an alternating ring which encloses part of the gamma chain. CF(1) is attached to CF(0) by a central stalk formed by the gamma and epsilon chains, while a peripheral stalk is formed by the delta and b chains.

Its subcellular location is the cell membrane. It catalyses the reaction ATP + H2O + 4 H(+)(in) = ADP + phosphate + 5 H(+)(out). Its function is as follows. Produces ATP from ADP in the presence of a proton gradient across the membrane. The alpha chain is a regulatory subunit. The sequence is that of ATP synthase subunit alpha from Bacillus cereus (strain ATCC 14579 / DSM 31 / CCUG 7414 / JCM 2152 / NBRC 15305 / NCIMB 9373 / NCTC 2599 / NRRL B-3711).